The sequence spans 178 residues: Interleukin-1 receptor antagonist protein (178 aa).

The signal sequence occupies residues methionine 1–cysteine 26. A disulfide bond links cysteine 92 and cysteine 142. N-linked (GlcNAc...) asparagine glycosylation occurs at asparagine 110.

The protein belongs to the IL-1 family.

Its subcellular location is the secreted. It is found in the cytoplasm. Anti-inflammatory antagonist of interleukin-1 family of proinflammatory cytokines such as interleukin-1beta/IL1B and interleukin-1alpha/IL1A. Protects from immune dysregulation and uncontrolled systemic inflammation triggered by IL1 for a range of innate stimulatory agents such as pathogens. This chain is Interleukin-1 receptor antagonist protein (Il1rn), found in Mus musculus (Mouse).